Here is a 451-residue protein sequence, read N- to C-terminus: Serine/threonine-protein kinase VRK3 (451 aa).

2 disordered regions span residues 28–61 and 74–125; these read KHEGSQSFVKPFTSSSQGSRRKTNTSSETSSKKV and LPSE…MTAS. Residues 32 to 45 are compositionally biased toward polar residues; sequence SQSFVKPFTSSSQG. Positions 47–62 match the Nuclear localization signal motif; that stretch reads RRKTNTSSETSSKKVK. S53, S57, S80, S81, S88, and S106 each carry phosphoserine. Residues 78–91 show a composition bias toward polar residues; the sequence is GKSSGSEDTLSTSG. A compositionally biased stretch (low complexity) spans 98–116; it reads SRSPTPRSSPQTTRQSPQT. A Protein kinase domain is found at 123-434; that stretch reads TASLEALPVG…TLRNELEALL (312 aa).

This sequence belongs to the protein kinase superfamily. CK1 Ser/Thr protein kinase family. VRK subfamily. Interacts with DUSP3. Interacts with RAN. Interacts with HSP70/HSPA1A. In terms of processing, phosphorylated at Ser-106 by CDK5; leading to protection of the cell against H2O2-induced apoptosis. Post-translationally, ubiquitinated by RNF144A.

It is found in the nucleus. Its subcellular location is the cytoplasm. The catalysed reaction is L-seryl-[protein] + ATP = O-phospho-L-seryl-[protein] + ADP + H(+). Its function is as follows. Plays a role in the regulation of the cell cycle by phosphorylating the nuclear envelope protein barrier-to-autointegration factor/BAF that is required for disassembly and reassembly, respectively, of the nuclear envelope during mitosis. Under normal physiological conditions, negatively regulates ERK activity along with VHR phosphatase in the nucleus, causing timely and transient action of ERK. Stress conditions activate CDK5 which phosphorylates VRK3 to increase VHR phosphatase activity and suppress prolonged ERK activation that causes cell death. For example, upon glutamate induction, promotes nuclear localization of HSP70/HSPA1A to inhibit ERK activation via VHR phosphatase. In Bos taurus (Bovine), this protein is Serine/threonine-protein kinase VRK3 (VRK3).